The following is a 405-amino-acid chain: Imidazolonepropionase (405 aa).

The Fe(3+) site is built by H73 and H75. Positions 73 and 75 each coordinate Zn(2+). Residues R82, Y145, and H178 each coordinate 4-imidazolone-5-propanoate. Y145 provides a ligand contact to N-formimidoyl-L-glutamate. Position 243 (H243) interacts with Fe(3+). H243 contacts Zn(2+). Q246 is a 4-imidazolone-5-propanoate binding site. D318 lines the Fe(3+) pocket. Residue D318 coordinates Zn(2+). N-formimidoyl-L-glutamate contacts are provided by N320 and G322. 4-imidazolone-5-propanoate is bound at residue T323.

The protein belongs to the metallo-dependent hydrolases superfamily. HutI family. It depends on Zn(2+) as a cofactor. The cofactor is Fe(3+).

The protein localises to the cytoplasm. It carries out the reaction 4-imidazolone-5-propanoate + H2O = N-formimidoyl-L-glutamate. The protein operates within amino-acid degradation; L-histidine degradation into L-glutamate; N-formimidoyl-L-glutamate from L-histidine: step 3/3. Functionally, catalyzes the hydrolytic cleavage of the carbon-nitrogen bond in imidazolone-5-propanoate to yield N-formimidoyl-L-glutamate. It is the third step in the universal histidine degradation pathway. The chain is Imidazolonepropionase from Brucella abortus (strain S19).